Here is a 75-residue protein sequence, read N- to C-terminus: Acyl carrier protein (75 aa).

Positions M1–V75 constitute a Carrier domain. S36 carries the post-translational modification O-(pantetheine 4'-phosphoryl)serine.

This sequence belongs to the acyl carrier protein (ACP) family. 4'-phosphopantetheine is transferred from CoA to a specific serine of apo-ACP by AcpS. This modification is essential for activity because fatty acids are bound in thioester linkage to the sulfhydryl of the prosthetic group.

Its subcellular location is the cytoplasm. Its pathway is lipid metabolism; fatty acid biosynthesis. Carrier of the growing fatty acid chain in fatty acid biosynthesis. The sequence is that of Acyl carrier protein from Sulfurovum sp. (strain NBC37-1).